The chain runs to 126 residues: Fatty acid-binding protein, liver (126 aa).

Cholate-binding positions include 54 to 56, 99 to 101, and R121; these read TPN and HEQ.

This sequence belongs to the calycin superfamily. Fatty-acid binding protein (FABP) family.

It localises to the cytoplasm. Functionally, FABPs are thought to play a role in the intracellular transport of long-chain fatty acids and their acyl-CoA esters. This is Fatty acid-binding protein, liver from Anolis pulchellus (Common grass anole).